The chain runs to 392 residues: Enoyl-[acyl-carrier-protein] reductase [NADH] (392 aa).

NAD(+)-binding positions include 48–53, 74–75, 111–112, and 139–140; these read GCSTGY, FE, DA, and LA. Tyrosine 225 is a substrate binding site. The active-site Proton donor is the tyrosine 235. Residues lysine 244 and 273–275 contribute to the NAD(+) site; that span reads LVT.

This sequence belongs to the TER reductase family. As to quaternary structure, monomer.

It catalyses the reaction a 2,3-saturated acyl-[ACP] + NAD(+) = a (2E)-enoyl-[ACP] + NADH + H(+). Its pathway is lipid metabolism; fatty acid biosynthesis. In terms of biological role, involved in the final reduction of the elongation cycle of fatty acid synthesis (FAS II). Catalyzes the reduction of a carbon-carbon double bond in an enoyl moiety that is covalently linked to an acyl carrier protein (ACP). In Idiomarina loihiensis (strain ATCC BAA-735 / DSM 15497 / L2-TR), this protein is Enoyl-[acyl-carrier-protein] reductase [NADH].